The sequence spans 503 residues: Aromatase 1 (503 aa).

Cysteine 437 contributes to the heme binding site.

The protein belongs to the cytochrome P450 family. Heme is required as a cofactor.

The protein localises to the membrane. The enzyme catalyses testosterone + 3 reduced [NADPH--hemoprotein reductase] + 3 O2 = 17beta-estradiol + formate + 3 oxidized [NADPH--hemoprotein reductase] + 4 H2O + 4 H(+). The catalysed reaction is androst-4-ene-3,17-dione + 3 reduced [NADPH--hemoprotein reductase] + 3 O2 = estrone + formate + 3 oxidized [NADPH--hemoprotein reductase] + 4 H2O + 4 H(+). Functionally, catalyzes the formation of aromatic C18 estrogens from C19 androgens. The polypeptide is Aromatase 1 (CYP19A1) (Sus scrofa (Pig)).